A 251-amino-acid polypeptide reads, in one-letter code: Triosephosphate isomerase (251 aa).

9-11 is a substrate binding site; sequence NWK. Histidine 95 acts as the Electrophile in catalysis. Glutamate 167 serves as the catalytic Proton acceptor. Residues glycine 173, serine 213, and 234 to 235 contribute to the substrate site; that span reads GG.

It belongs to the triosephosphate isomerase family. As to quaternary structure, homodimer.

It localises to the cytoplasm. It carries out the reaction D-glyceraldehyde 3-phosphate = dihydroxyacetone phosphate. It participates in carbohydrate biosynthesis; gluconeogenesis. It functions in the pathway carbohydrate degradation; glycolysis; D-glyceraldehyde 3-phosphate from glycerone phosphate: step 1/1. In terms of biological role, involved in the gluconeogenesis. Catalyzes stereospecifically the conversion of dihydroxyacetone phosphate (DHAP) to D-glyceraldehyde-3-phosphate (G3P). The chain is Triosephosphate isomerase from Enterococcus faecalis (strain ATCC 700802 / V583).